The following is a 910-amino-acid chain: Ubiquitin carboxyl-terminal hydrolase 9 (910 aa).

The DUSP domain occupies 19–134; it reads TTPEEEKRIV…GGPPIERKLI (116 aa). The interval 68-89 is disordered; the sequence is ISGESSEASRPGPIDNHDIIES. In terms of domain architecture, USP spans 303 to 894; the sequence is AGLSNLGNTC…AAYVLFYRRV (592 aa). The active-site Nucleophile is cysteine 312. Histidine 852 (proton acceptor) is an active-site residue.

It belongs to the peptidase C19 family.

It carries out the reaction Thiol-dependent hydrolysis of ester, thioester, amide, peptide and isopeptide bonds formed by the C-terminal Gly of ubiquitin (a 76-residue protein attached to proteins as an intracellular targeting signal).. Functionally, recognizes and hydrolyzes the peptide bond at the C-terminal Gly of ubiquitin. Involved in the processing of poly-ubiquitin precursors as well as that of ubiquitinated proteins. The protein is Ubiquitin carboxyl-terminal hydrolase 9 (UBP9) of Arabidopsis thaliana (Mouse-ear cress).